Here is a 160-residue protein sequence, read N- to C-terminus: Eukaryotic translation initiation factor 5A (160 aa).

Positions 1 to 13 (MSDSEEHHFESKA) are enriched in basic and acidic residues. Residues 1–22 (MSDSEEHHFESKADAGASKTYP) form a disordered region. Residue lysine 53 is modified to Hypusine.

The protein belongs to the eIF-5A family. Post-translationally, lys-53 undergoes hypusination, a unique post-translational modification that consists in the addition of a butylamino group from spermidine to lysine side chain, leading to the formation of the unusual amino acid hypusine. eIF-5As are the only known proteins to undergo this modification, which is essential for their function.

Translation factor that promotes translation elongation and termination, particularly upon ribosome stalling at specific amino acid sequence contexts. Binds between the exit (E) and peptidyl (P) site of the ribosome and promotes rescue of stalled ribosome: specifically required for efficient translation of polyproline-containing peptides as well as other motifs that stall the ribosome. Acts as a ribosome quality control (RQC) cofactor by joining the RQC complex to facilitate peptidyl transfer during CAT tailing step. In Zea mays (Maize), this protein is Eukaryotic translation initiation factor 5A (TIF5A).